The chain runs to 300 residues: Ribosomal RNA small subunit methyltransferase H (300 aa).

S-adenosyl-L-methionine contacts are provided by residues 33-35 (GGH), D52, F79, D100, and Q107.

Belongs to the methyltransferase superfamily. RsmH family.

It is found in the cytoplasm. It carries out the reaction cytidine(1402) in 16S rRNA + S-adenosyl-L-methionine = N(4)-methylcytidine(1402) in 16S rRNA + S-adenosyl-L-homocysteine + H(+). Functionally, specifically methylates the N4 position of cytidine in position 1402 (C1402) of 16S rRNA. The chain is Ribosomal RNA small subunit methyltransferase H from Mycoplasmopsis agalactiae (strain NCTC 10123 / CIP 59.7 / PG2) (Mycoplasma agalactiae).